Consider the following 314-residue polypeptide: Small ribosomal subunit biogenesis GTPase RsgA (314 aa).

Positions 1-20 (MKRAPTKQPAKPAARGGERA) are disordered. The CP-type G domain maps to 85 to 246 (SDQFKSKLFA…LIDSPGFQEF (162 aa)). Residues 134–137 (NKID) and 188–196 (GQSGMGKST) each bind GTP. Positions 270, 275, 277, and 283 each coordinate Zn(2+).

Belongs to the TRAFAC class YlqF/YawG GTPase family. RsgA subfamily. As to quaternary structure, monomer. Associates with 30S ribosomal subunit, binds 16S rRNA. Requires Zn(2+) as cofactor.

It localises to the cytoplasm. Functionally, one of several proteins that assist in the late maturation steps of the functional core of the 30S ribosomal subunit. Helps release RbfA from mature subunits. May play a role in the assembly of ribosomal proteins into the subunit. Circularly permuted GTPase that catalyzes slow GTP hydrolysis, GTPase activity is stimulated by the 30S ribosomal subunit. This chain is Small ribosomal subunit biogenesis GTPase RsgA, found in Burkholderia pseudomallei (strain K96243).